The following is a 310-amino-acid chain: Ribosomal RNA small subunit methyltransferase H (310 aa).

S-adenosyl-L-methionine contacts are provided by residues 32–34, aspartate 52, phenylalanine 79, aspartate 100, and glutamine 107; that span reads GGH.

Belongs to the methyltransferase superfamily. RsmH family.

The protein localises to the cytoplasm. It carries out the reaction cytidine(1402) in 16S rRNA + S-adenosyl-L-methionine = N(4)-methylcytidine(1402) in 16S rRNA + S-adenosyl-L-homocysteine + H(+). Functionally, specifically methylates the N4 position of cytidine in position 1402 (C1402) of 16S rRNA. The chain is Ribosomal RNA small subunit methyltransferase H from Bacillus mycoides (strain KBAB4) (Bacillus weihenstephanensis).